Reading from the N-terminus, the 435-residue chain is MFILTMGLNHHTAPIDIREKLVFKETEEEMALVTLQQEKSILENVIISTCNRTEIVAVVDQIHTGRYYLKRFMANWFQMDMEKIEPYLFFHEETEAVNHLYKVTAGLDSLVLGETQILGQVKHAFEIAKQTETTGTLLNKLFREVVTFAKKVHHHTKINENAVSVSYAAVEVAKKLYGSLDNKKIVLVGAGEMSELALQNLAGSGIADITIINRTKSNAELLANQFQAKVGAYENMNEHLMLADIVLVSTSATEPIIKQAAMQDLMEQKASSMLVIDIGLPRNVEHDCSYIPNFHLYDIDDLAGVVSANSLERQRIVLELENTIEVEVRNFFEWEKQLGVVPVIRALREKALDMQEVAMTSLENKLPGLTEREYIQIGKHMKSIINQMLKQPISELKEMSVEEDATTSIEHFKRIFGLSETDVTVIEKEQAETRS.

Residues 49-52, S109, 114-116, and Q120 each bind substrate; these read TCNR and ETQ. C50 functions as the Nucleophile in the catalytic mechanism. 189-194 is a binding site for NADP(+); the sequence is GAGEMS.

Belongs to the glutamyl-tRNA reductase family. In terms of assembly, homodimer.

The catalysed reaction is (S)-4-amino-5-oxopentanoate + tRNA(Glu) + NADP(+) = L-glutamyl-tRNA(Glu) + NADPH + H(+). The protein operates within porphyrin-containing compound metabolism; protoporphyrin-IX biosynthesis; 5-aminolevulinate from L-glutamyl-tRNA(Glu): step 1/2. Catalyzes the NADPH-dependent reduction of glutamyl-tRNA(Glu) to glutamate 1-semialdehyde (GSA). This Listeria monocytogenes serovar 1/2a (strain ATCC BAA-679 / EGD-e) protein is Glutamyl-tRNA reductase.